Consider the following 513-residue polypeptide: ATP synthase subunit alpha (513 aa).

169–176 (GDRQTGKT) contacts ATP.

Belongs to the ATPase alpha/beta chains family. F-type ATPases have 2 components, CF(1) - the catalytic core - and CF(0) - the membrane proton channel. CF(1) has five subunits: alpha(3), beta(3), gamma(1), delta(1), epsilon(1). CF(0) has three main subunits: a(1), b(2) and c(9-12). The alpha and beta chains form an alternating ring which encloses part of the gamma chain. CF(1) is attached to CF(0) by a central stalk formed by the gamma and epsilon chains, while a peripheral stalk is formed by the delta and b chains.

The protein resides in the cell inner membrane. The catalysed reaction is ATP + H2O + 4 H(+)(in) = ADP + phosphate + 5 H(+)(out). In terms of biological role, produces ATP from ADP in the presence of a proton gradient across the membrane. The alpha chain is a regulatory subunit. The polypeptide is ATP synthase subunit alpha (Methylobacillus flagellatus (strain ATCC 51484 / DSM 6875 / VKM B-1610 / KT)).